The following is a 365-amino-acid chain: Histidinol-phosphate aminotransferase 2 (365 aa).

Residue Lys226 is modified to N6-(pyridoxal phosphate)lysine.

The protein belongs to the class-II pyridoxal-phosphate-dependent aminotransferase family. Histidinol-phosphate aminotransferase subfamily. Homodimer. The cofactor is pyridoxal 5'-phosphate.

The enzyme catalyses L-histidinol phosphate + 2-oxoglutarate = 3-(imidazol-4-yl)-2-oxopropyl phosphate + L-glutamate. It participates in amino-acid biosynthesis; L-histidine biosynthesis; L-histidine from 5-phospho-alpha-D-ribose 1-diphosphate: step 7/9. The sequence is that of Histidinol-phosphate aminotransferase 2 (hisC2) from Pasteurella multocida (strain Pm70).